The sequence spans 39 residues: MQVNPNPNKLSVELNRTSLYLGLLLVFVLGILFSSYFFN.

A helical transmembrane segment spans residues 18–38; sequence SLYLGLLLVFVLGILFSSYFF.

The protein belongs to the PsbL family. In terms of assembly, PSII is composed of 1 copy each of membrane proteins PsbA, PsbB, PsbC, PsbD, PsbE, PsbF, PsbH, PsbI, PsbJ, PsbK, PsbL, PsbM, PsbT, PsbX, PsbY, Psb30/Ycf12, peripheral proteins PsbO, CyanoQ (PsbQ), PsbU, PsbV and a large number of cofactors. It forms dimeric complexes.

The protein localises to the cellular thylakoid membrane. Functionally, one of the components of the core complex of photosystem II (PSII). PSII is a light-driven water:plastoquinone oxidoreductase that uses light energy to abstract electrons from H(2)O, generating O(2) and a proton gradient subsequently used for ATP formation. It consists of a core antenna complex that captures photons, and an electron transfer chain that converts photonic excitation into a charge separation. This subunit is found at the monomer-monomer interface and is required for correct PSII assembly and/or dimerization. The sequence is that of Photosystem II reaction center protein L from Prochlorococcus marinus (strain SARG / CCMP1375 / SS120).